The primary structure comprises 293 residues: MTQAPVTAGTPYGTIPPASPLPQRRPVSLPRLAQMREAGEKITMVTAYDATFAAVADAAGVECILVGDSLGMVCQGLHSTVGVSLQDMCYHTASVARGLHRVQGTAWLIADMPYGSYAESREQAMRSACELMQAGAHMVKLEGGGWTAPTVQFLVERGVPVCAHLGLTPQTVHALGGYRVQGKSDEGAATLRRHALELQDAGASMLVLEMVPAQLSRELTAELPHCHTIGIGAGSGTAGQVLVLHDMLGVNLGKMARFVHNFMADAGSVKGAFEAYVHAVKNGSFPDDSKHAW.

The segment at 1 to 26 is disordered; sequence MTQAPVTAGTPYGTIPPASPLPQRRP. 2 residues coordinate Mg(2+): D68 and D111. 3-methyl-2-oxobutanoate-binding positions include 68 to 69, D111, and K140; that span reads DS. E142 serves as a coordination point for Mg(2+). E209 (proton acceptor) is an active-site residue.

This sequence belongs to the PanB family. As to quaternary structure, homodecamer; pentamer of dimers. Requires Mg(2+) as cofactor.

It is found in the cytoplasm. The catalysed reaction is 3-methyl-2-oxobutanoate + (6R)-5,10-methylene-5,6,7,8-tetrahydrofolate + H2O = 2-dehydropantoate + (6S)-5,6,7,8-tetrahydrofolate. It functions in the pathway cofactor biosynthesis; (R)-pantothenate biosynthesis; (R)-pantoate from 3-methyl-2-oxobutanoate: step 1/2. In terms of biological role, catalyzes the reversible reaction in which hydroxymethyl group from 5,10-methylenetetrahydrofolate is transferred onto alpha-ketoisovalerate to form ketopantoate. This Delftia acidovorans (strain DSM 14801 / SPH-1) protein is 3-methyl-2-oxobutanoate hydroxymethyltransferase.